Reading from the N-terminus, the 219-residue chain is GPI ethanolamine phosphate transferase, stabilizing subunit (219 aa).

6 helical membrane passes run 11–31, 42–62, 86–106, 113–133, 155–175, and 189–209; these read YTHLLCIFSIILSVFIPSLFL, TWLCICSGFVTAVNLVLYLVV, YFLMSCFSFHVIFVLYGAPLI, FLFAVILSTFTTVPCLCLLGP, LQITTISSFVGAWLGALPIPL, and TLGATFGYVAGLVISPLWIYW.

This sequence belongs to the PIGF family. Part of the ethanolamine phosphate transferase 3 complex composed by PIGO and PIGF. Part of the ethanolamine phosphate transferase 2 complex with PIGG. PIGF is required to stabilize PIGG and PIGO.

Its subcellular location is the endoplasmic reticulum membrane. The protein operates within glycolipid biosynthesis; glycosylphosphatidylinositol-anchor biosynthesis. Its function is as follows. Stabilizing subunit of the ethanolamine phosphate transferase 3 and ethanolamine phosphate transferase 2 complexes that sequentially transfer an ethanolamine phosphate (EtNP) from a phosphatidylethanolamine (PE) to the 6-OH position of the third alpha-1,2-linked mannose and the second alpha-1,6-linked mannose of the alpha-D-Man-(1-&gt;2)-alpha-D-Man-(1-&gt;6)-2-PEtn-alpha-D-Man-(1-&gt;4)-alpha-D-GlcN-(1-&gt;6)-(1-radyl,2-acyl-sn-glycero-3-phospho)-2-acyl-inositol (also termed H6) intermediate to generate a 6-PEtn-alpha-D-Man-(1-&gt;2)-6-PEtn-alpha-D-Man-(1-&gt;6)-2-PEtn-alpha-D-Man-(1-&gt;4)-alpha-D-GlcN-(1-&gt;6)-(1-radyl,2-acyl-sn-glycero-3-phospho)-2-acyl-inositol (also termed H8). Participates in the tenth and eleventh steps of the glycosylphosphatidylinositol-anchor biosynthesis, in association with PIGO and PIGG, respectively. The sequence is that of GPI ethanolamine phosphate transferase, stabilizing subunit from Homo sapiens (Human).